The chain runs to 276 residues: Ribosomal RNA small subunit methyltransferase A (276 aa).

Positions 27, 29, 54, 75, 101, and 122 each coordinate S-adenosyl-L-methionine.

The protein belongs to the class I-like SAM-binding methyltransferase superfamily. rRNA adenine N(6)-methyltransferase family. RsmA subfamily.

Its subcellular location is the cytoplasm. It carries out the reaction adenosine(1518)/adenosine(1519) in 16S rRNA + 4 S-adenosyl-L-methionine = N(6)-dimethyladenosine(1518)/N(6)-dimethyladenosine(1519) in 16S rRNA + 4 S-adenosyl-L-homocysteine + 4 H(+). Specifically dimethylates two adjacent adenosines (A1518 and A1519) in the loop of a conserved hairpin near the 3'-end of 16S rRNA in the 30S particle. May play a critical role in biogenesis of 30S subunits. The polypeptide is Ribosomal RNA small subunit methyltransferase A (Brucella suis (strain ATCC 23445 / NCTC 10510)).